Reading from the N-terminus, the 465-residue chain is Ribulose bisphosphate carboxylase large chain (465 aa).

The residue at position 4 (Lys4) is an N6,N6,N6-trimethyllysine. Substrate contacts are provided by Asn113 and Thr163. Lys165 functions as the Proton acceptor in the catalytic mechanism. Lys167 contributes to the substrate binding site. The Mg(2+) site is built by Lys191, Asp193, and Glu194. At Lys191 the chain carries N6-carboxylysine. Residue His284 is the Proton acceptor of the active site. Residues Arg285, His317, and Ser369 each contribute to the substrate site.

Belongs to the RuBisCO large chain family. Type I subfamily. As to quaternary structure, heterohexadecamer of 8 large chains and 8 small chains; disulfide-linked. The disulfide link is formed within the large subunit homodimers. Mg(2+) serves as cofactor. The disulfide bond which can form in the large chain dimeric partners within the hexadecamer appears to be associated with oxidative stress and protein turnover.

The protein resides in the plastid. It localises to the chloroplast. The enzyme catalyses 2 (2R)-3-phosphoglycerate + 2 H(+) = D-ribulose 1,5-bisphosphate + CO2 + H2O. It catalyses the reaction D-ribulose 1,5-bisphosphate + O2 = 2-phosphoglycolate + (2R)-3-phosphoglycerate + 2 H(+). RuBisCO catalyzes two reactions: the carboxylation of D-ribulose 1,5-bisphosphate, the primary event in carbon dioxide fixation, as well as the oxidative fragmentation of the pentose substrate in the photorespiration process. Both reactions occur simultaneously and in competition at the same active site. The chain is Ribulose bisphosphate carboxylase large chain from Cassia fistula (Golden shower tree).